The sequence spans 102 residues: MYAIIETGGKQIKVEEGQEIYVEKLDAEAGEEVSFDKVLFVGGESAKVGAPFVEGASVTGTVEKHGRNKKIIVYKMKAKKNYRRKQGHRQPYTKVVIGKING.

This sequence belongs to the bacterial ribosomal protein bL21 family. As to quaternary structure, part of the 50S ribosomal subunit. Contacts protein L20.

Its function is as follows. This protein binds to 23S rRNA in the presence of protein L20. The protein is Large ribosomal subunit protein bL21 of Shouchella clausii (strain KSM-K16) (Alkalihalobacillus clausii).